A 375-amino-acid chain; its full sequence is Chaperone protein DnaJ (375 aa).

Residues 4–68 (DYYEVLGVGK…QKRAQYDRFG (65 aa)) enclose the J domain. Residues 129–211 (GKETDVEIPK…CRGSGRVKVR (83 aa)) form a CR-type zinc finger. The Zn(2+) site is built by C142, C145, C159, C162, C185, C188, C199, and C202. CXXCXGXG motif repeat units lie at residues 142–149 (CDTCHGSG), 159–166 (CKTCSGTG), 185–192 (CTTCEGKG), and 199–206 (CSSCRGSG). The interval 349–375 (LSGEKPGQHGGEDEGFFEKMKRAFRGE) is disordered.

This sequence belongs to the DnaJ family. Homodimer. Zn(2+) serves as cofactor.

Its subcellular location is the cytoplasm. In terms of biological role, participates actively in the response to hyperosmotic and heat shock by preventing the aggregation of stress-denatured proteins and by disaggregating proteins, also in an autonomous, DnaK-independent fashion. Unfolded proteins bind initially to DnaJ; upon interaction with the DnaJ-bound protein, DnaK hydrolyzes its bound ATP, resulting in the formation of a stable complex. GrpE releases ADP from DnaK; ATP binding to DnaK triggers the release of the substrate protein, thus completing the reaction cycle. Several rounds of ATP-dependent interactions between DnaJ, DnaK and GrpE are required for fully efficient folding. Also involved, together with DnaK and GrpE, in the DNA replication of plasmids through activation of initiation proteins. This Brevibacillus choshinensis protein is Chaperone protein DnaJ.